A 302-amino-acid polypeptide reads, in one-letter code: Protoheme IX farnesyltransferase (302 aa).

9 helical membrane-spanning segments follow: residues 24 to 44 (VVSL…FSGY), 48 to 68 (FFSV…AGAL), 97 to 117 (AALV…ELAV), 120 to 140 (LSAV…TVYL), 147 to 167 (NIVV…AAVA), 174 to 194 (SLVL…ALAL), 221 to 241 (ILCY…LRFS), 245 to 265 (YMIV…NVYL), and 282 to 302 (FLLF…GMLI).

Belongs to the UbiA prenyltransferase family. Protoheme IX farnesyltransferase subfamily.

It is found in the cell inner membrane. It catalyses the reaction heme b + (2E,6E)-farnesyl diphosphate + H2O = Fe(II)-heme o + diphosphate. It functions in the pathway porphyrin-containing compound metabolism; heme O biosynthesis; heme O from protoheme: step 1/1. In terms of biological role, converts heme B (protoheme IX) to heme O by substitution of the vinyl group on carbon 2 of heme B porphyrin ring with a hydroxyethyl farnesyl side group. The sequence is that of Protoheme IX farnesyltransferase from Neorickettsia sennetsu (strain ATCC VR-367 / Miyayama) (Ehrlichia sennetsu).